Consider the following 653-residue polypeptide: Testicular spindle-associated protein SHCBP1L (653 aa).

The interval 1–65 (MASGSKASVP…PVKGKAGRET (65 aa)) is disordered. At serine 8 the chain carries Phosphoserine. The segment covering 28–41 (SAVSGDTAAATTLK) has biased composition (polar residues). Over residues 46 to 56 (PVRSVVASPRP) the composition is skewed to low complexity. Position 53 is a phosphoserine (serine 53). The stretch at 299–326 (IAQRFKKTLEKYKNKRVELIEYQSNIKE) forms a coiled coil. PbH1 repeat units follow at residues 493-514 (SGHMTLENCILKCEGTGVCVLT), 515-537 (GAALTITDSEITGAQGAGVELYP), 538-571 (GSIAILERNEIHHCNNLRTSNSSKSTLGGVNMKV), and 574-596 (APKLKMTNNHIYSNKGYGVSILQ). The residue at position 570 (lysine 570) is an N6-acetyllysine. At lysine 645 the chain carries N6-acetyllysine.

In terms of assembly, interacts with HSPA2; this interaction may promote the recruitment of HSPA2 to the spindle. In terms of tissue distribution, expressed in spermatocytes and elongating spermatids inside the seminiferous tubules (at protein level). Testis-specific.

The protein resides in the cytoplasm. Its subcellular location is the cytoskeleton. It is found in the spindle. In terms of biological role, testis-specific spindle-associated factor that plays a role in spermatogenesis. In association with HSPA2, participates in the maintenance of spindle integrity during meiosis in male germ cells. This chain is Testicular spindle-associated protein SHCBP1L, found in Homo sapiens (Human).